A 283-amino-acid chain; its full sequence is MSALPSPSPRPARSQYEDFLRHVRDHGVVKADRTGTGTTSVFGHQMRFDLREGFPLVTTKKVHLKSIVLELLWFLRGDGNATWLQERGVTIWDEWAAPDGDLGPVYGVQWRSWPTPDGGHVDQIAEVVKQLKTNPDSRRIIVSAWNVADLPKMALMPCHAFFQFYVAPGDSPSARGRLSCQLYQRSADIFLGVPFNIASYALLTHMLAQQCDLEVGDFVWTGGDCHIYSNHREQVELQLSRAPRPYPTLQIKRRPPSIFDYAYEDFEIIGYDPHPAIKAPVAV.

R33 serves as a coordination point for dUMP. H63 is a (6R)-5,10-methylene-5,6,7,8-tetrahydrofolate binding site. 138 to 139 (RR) contacts dUMP. C158 functions as the Nucleophile in the catalytic mechanism. Residues 185–188 (RSAD), N196, and 226–228 (HIY) contribute to the dUMP site. D188 provides a ligand contact to (6R)-5,10-methylene-5,6,7,8-tetrahydrofolate. A282 serves as a coordination point for (6R)-5,10-methylene-5,6,7,8-tetrahydrofolate.

Belongs to the thymidylate synthase family. Bacterial-type ThyA subfamily. As to quaternary structure, homodimer.

The protein resides in the cytoplasm. It carries out the reaction dUMP + (6R)-5,10-methylene-5,6,7,8-tetrahydrofolate = 7,8-dihydrofolate + dTMP. It functions in the pathway pyrimidine metabolism; dTTP biosynthesis. Its function is as follows. Catalyzes the reductive methylation of 2'-deoxyuridine-5'-monophosphate (dUMP) to 2'-deoxythymidine-5'-monophosphate (dTMP) while utilizing 5,10-methylenetetrahydrofolate (mTHF) as the methyl donor and reductant in the reaction, yielding dihydrofolate (DHF) as a by-product. This enzymatic reaction provides an intracellular de novo source of dTMP, an essential precursor for DNA biosynthesis. The sequence is that of Thymidylate synthase from Methylibium petroleiphilum (strain ATCC BAA-1232 / LMG 22953 / PM1).